Here is a 291-residue protein sequence, read N- to C-terminus: Lectin (291 aa).

The first 28 residues, 1–28 (MGISKKSQLVPLLAFITMFLMVVSRVSS), serve as a signal peptide directing secretion. D118 is a binding site for Ca(2+). R138 is an a carbohydrate binding site. Positions 147–162 (NIIKNSTNLDFNAAYN) are cleaved as a propeptide — removed in mature form. Residues E170 and D172 each contribute to the Mn(2+) site. Ca(2+) contacts are provided by D172, Y174, N176, and D181. Position 174 (Y174) interacts with a carbohydrate. Mn(2+) is bound by residues D181 and H186. K208 provides a ligand contact to Ca(2+). S228 lines the a carbohydrate pocket. Positions 281-291 (QLQDLRIASVV) are cleaved as a propeptide — removed in mature form.

The protein belongs to the leguminous lectin family. In terms of processing, the mature chain consists of residues 163-280 followed by residues 29-147. Concanavalin A-like lectins of the Diocleinae subtribe undergo proteolytic processing referred to as circular permutation. The propeptide is split into an N-terminal and a C-terminal part, the gamma and beta chain, respectively. These are then religated in beta-gamma order to form the mature alpha chain. The beta and gamma chains can often be detected in cell extracts.

Its function is as follows. D-mannose-binding lectin that also binds alpha-methyl-D-mannoside with even higher affinity. Has hemagglutinating activity against rabbit erythrocytes. Shows toxicity against the brine shrimp A.nauplii. Induces reversible paw edema and hypernociceptivity in rats. This Dioclea lasiophylla protein is Lectin.